The primary structure comprises 218 residues: Adenylate kinase (218 aa).

Residue 10 to 15 (GAGKGT) coordinates ATP. The segment at 30 to 59 (STGDMLRAAVKAQSELGMAAKKVMDEGGLV) is NMP. Residues threonine 31, arginine 36, 57–59 (GLV), 85–88 (GFPR), and glutamine 92 contribute to the AMP site. Positions 122-159 (GRRVHPASGRTYHIVFNPPAVEGKDDVTGEDLVQRDDD) are LID. ATP is bound by residues arginine 123 and 132 to 133 (TY). AMP-binding residues include arginine 156 and arginine 167. Glycine 203 provides a ligand contact to ATP.

This sequence belongs to the adenylate kinase family. In terms of assembly, monomer.

The protein resides in the cytoplasm. It carries out the reaction AMP + ATP = 2 ADP. Its pathway is purine metabolism; AMP biosynthesis via salvage pathway; AMP from ADP: step 1/1. Catalyzes the reversible transfer of the terminal phosphate group between ATP and AMP. Plays an important role in cellular energy homeostasis and in adenine nucleotide metabolism. The protein is Adenylate kinase of Chlorobaculum parvum (strain DSM 263 / NCIMB 8327) (Chlorobium vibrioforme subsp. thiosulfatophilum).